Consider the following 171-residue polypeptide: 3-hydroxydecanoyl-[acyl-carrier-protein] dehydratase (171 aa).

His-70 is a catalytic residue.

Belongs to the thioester dehydratase family. FabA subfamily. As to quaternary structure, homodimer.

The protein resides in the cytoplasm. It carries out the reaction a (3R)-hydroxyacyl-[ACP] = a (2E)-enoyl-[ACP] + H2O. It catalyses the reaction (3R)-hydroxydecanoyl-[ACP] = (2E)-decenoyl-[ACP] + H2O. The catalysed reaction is (2E)-decenoyl-[ACP] = (3Z)-decenoyl-[ACP]. The protein operates within lipid metabolism; fatty acid biosynthesis. Necessary for the introduction of cis unsaturation into fatty acids. Catalyzes the dehydration of (3R)-3-hydroxydecanoyl-ACP to E-(2)-decenoyl-ACP and then its isomerization to Z-(3)-decenoyl-ACP. Can catalyze the dehydratase reaction for beta-hydroxyacyl-ACPs with saturated chain lengths up to 16:0, being most active on intermediate chain length. In Shewanella denitrificans (strain OS217 / ATCC BAA-1090 / DSM 15013), this protein is 3-hydroxydecanoyl-[acyl-carrier-protein] dehydratase.